Reading from the N-terminus, the 456-residue chain is L-2-hydroxyglutarate dehydrogenase, mitochondrial (456 aa).

The N-terminal 20 residues, 1–20, are a transit peptide targeting the mitochondrion; that stretch reads MLKTSFLLSKRNAVSLSRVL.

Belongs to the L2HGDH family. FAD serves as cofactor.

It localises to the mitochondrion. The catalysed reaction is (S)-2-hydroxyglutarate + A = 2-oxoglutarate + AH2. The chain is L-2-hydroxyglutarate dehydrogenase, mitochondrial from Nematostella vectensis (Starlet sea anemone).